We begin with the raw amino-acid sequence, 534 residues long: Lysophosphatidylcholine acyltransferase 1 (534 aa).

The segment at 1–25 (MRLRGRGPRAAPSSSSGAGDARRLA) is disordered. Topologically, residues 1 to 57 (MRLRGRGPRAAPSSSSGAGDARRLAPPGRNPFVHELRLSALQKAQVAFMTLTLFPIR) are cytoplasmic. Over residues 8-19 (PRAAPSSSSGAG) the composition is skewed to low complexity. Residues 58–78 (LLFAAFMMLLAWPFALLASLG) traverse the membrane as a helical; Signal-anchor for type II membrane protein segment. The Lumenal portion of the chain corresponds to 79-534 (PPDKEPEQPL…GRKNSCKKAD (456 aa)). An HXXXXD motif motif is present at residues 135-140 (HSSYFD). EF-hand domains are found at residues 379-414 (PVSD…VCRP) and 451-486 (VSEL…YPDY). Ca(2+) contacts are provided by D392, S394, E398, and E403. A Di-lysine motif motif is present at residues 531 to 534 (KKAD).

Belongs to the 1-acyl-sn-glycerol-3-phosphate acyltransferase family. As to expression, predominantly expressed in lung where it is enriched in alveolar type II cells. Expressed at lower levels in spleen and brain. Also detected in erythroleukemic cells and reticulocytes. Weakly or not expressed in other tissues.

Its subcellular location is the endoplasmic reticulum membrane. The protein localises to the golgi apparatus membrane. The protein resides in the cell membrane. It is found in the lipid droplet. It carries out the reaction a 1-acyl-sn-glycero-3-phosphocholine + an acyl-CoA = a 1,2-diacyl-sn-glycero-3-phosphocholine + CoA. The enzyme catalyses a 1-O-alkyl-sn-glycero-3-phosphocholine + acetyl-CoA = a 1-O-alkyl-2-acetyl-sn-glycero-3-phosphocholine + CoA. It catalyses the reaction a 1-acyl-sn-glycero-3-phosphate + an acyl-CoA = a 1,2-diacyl-sn-glycero-3-phosphate + CoA. The catalysed reaction is a 1-O-(1Z-alkenyl)-sn-glycero-3-phosphocholine + an acyl-CoA = a 1-O-(1Z-alkenyl)-2-acyl-sn-glycero-3-phosphocholine + CoA. It carries out the reaction 1-acyl-sn-glycero-3-phospho-(1'-sn-glycerol) + an acyl-CoA = a 1,2-diacyl-sn-glycero-3-phospho-(1'-sn-glycerol) + CoA. The enzyme catalyses 1-hexadecanoyl-sn-glycero-3-phosphocholine + hexadecanoyl-CoA = 1,2-dihexadecanoyl-sn-glycero-3-phosphocholine + CoA. It catalyses the reaction 1-O-hexadecyl-sn-glycero-3-phosphocholine + hexadecanoyl-CoA = 1-O-hexadecyl-2-hexadecanoyl-sn-glycero-3-phosphocholine + CoA. The catalysed reaction is a 1-O-(1Z-alkenyl)-sn-glycero-3-phosphocholine + hexadecanoyl-CoA = 1-O-(1Z)-alkenyl-2-hexadecanoyl-sn-glycero-3-phosphocholine + CoA. It carries out the reaction 1-hexadecanoyl-sn-glycero-3-phospho-(1'-sn-glycerol) + hexadecanoyl-CoA = 1,2-dihexadecanoyl-sn-glycero-3-phospho-(1'-sn-glycerol) + CoA. The enzyme catalyses 1-dodecanoyl-sn-glycero-3-phosphocholine + hexadecanoyl-CoA = 1-dodecanoyl-2-hexadecanoyl-sn-glycero-3-phosphocholine + CoA. It catalyses the reaction 1-tetradecanoyl-sn-glycero-3-phosphocholine + hexadecanoyl-CoA = 1-tetradecanoyl-2-hexadecanoyl-sn-glycero-3-phosphocholine + CoA. The catalysed reaction is 1-O-octadecyl-sn-glycero-3-phosphocholine + hexadecanoyl-CoA = 1-O-octadecyl-2-hexadecanoyl-sn-glycero-3-phosphocholine + CoA. It carries out the reaction 1-octadecanoyl-sn-glycero-3-phosphocholine + hexadecanoyl-CoA = 1-octadecanoyl-2-hexadecanoyl-sn-glycero-3-phosphocholine + CoA. The enzyme catalyses 1-(9Z-octadecenoyl)-sn-glycero-3-phosphocholine + hexadecanoyl-CoA = 1-(9Z-octadecenoyl)-2-hexadecanoyl-sn-glycero-3-phosphocholine + CoA. It catalyses the reaction 1-eicosanoyl-sn-glycero-3-phosphocholine + hexadecanoyl-CoA = 1-eicosanoyl-2-hexadecanoyl-sn-glycero-3-phosphocholine + CoA. The catalysed reaction is hexanoyl-CoA + 1-hexadecanoyl-sn-glycero-3-phosphocholine = 1-hexadecanoyl-2-hexanoyl-sn-glycero-3-phosphocholine + CoA. It carries out the reaction octanoyl-CoA + 1-hexadecanoyl-sn-glycero-3-phosphocholine = 1-hexadecanoyl-2-octanoyl-sn-glycero-3-phosphocholine + CoA. The enzyme catalyses decanoyl-CoA + 1-hexadecanoyl-sn-glycero-3-phosphocholine = 1-hexadecanoyl-2-decanoyl-sn-glycero-3-phosphocholine + CoA. It catalyses the reaction dodecanoyl-CoA + 1-hexadecanoyl-sn-glycero-3-phosphocholine = 1-hexadecanoyl-2-dodecanoyl-sn-glycero-3-phosphocholine + CoA. The catalysed reaction is tetradecanoyl-CoA + 1-hexadecanoyl-sn-glycero-3-phosphocholine = 1-hexadecanoyl-2-tetradecanoyl-sn-glycero-3-phosphocholine + CoA. It carries out the reaction 1-hexadecanoyl-sn-glycero-3-phosphocholine + (9Z)-octadecenoyl-CoA = 1-hexadecanoyl-2-(9Z-octadecenoyl)-sn-glycero-3-phosphocholine + CoA. The enzyme catalyses (9Z,12Z)-octadecadienoyl-CoA + 1-hexadecanoyl-sn-glycero-3-phosphocholine = 1-hexadecanoyl-2-(9Z,12Z-octadecadienoyl)-sn-glycero-3-phosphocholine + CoA. It catalyses the reaction (4Z,7Z,10Z,13Z,16Z,19Z)-docosahexaenoyl-CoA + 1-hexadecanoyl-sn-glycero-3-phosphocholine = 1-hexadecanoyl-2-(4Z,7Z,10Z,13Z,16Z,19Z-docosahexaenoyl)-sn-glycero-3-phosphocholine + CoA. The catalysed reaction is 1-hexadecanoyl-sn-glycero-3-phosphocholine + acetyl-CoA = 1-hexadecanoyl-2-acetyl-sn-glycero-3-phosphocholine + CoA. It carries out the reaction eicosanoyl-CoA + 1-hexadecanoyl-sn-glycero-3-phosphocholine = 1-hexadecanoyl-2-eicosanoyl-sn-glycero-3-phosphocholine + CoA. The enzyme catalyses 1-O-hexadecyl-sn-glycero-3-phosphocholine + acetyl-CoA = 1-O-hexadecyl-2-acetyl-sn-glycero-3-phosphocholine + CoA. It catalyses the reaction a 1-acyl-sn-glycero-3-phosphocholine + hexadecanoyl-CoA = 1-acyl-2-hexadecanoyl-sn-glycero-3-phosphocholine + CoA. The catalysed reaction is a 1-acyl-sn-glycero-3-phosphate + hexadecanoyl-CoA = 1-acyl-2-hexadecanoyl-sn-glycero-3-phosphate + CoA. It carries out the reaction 1-acyl-sn-glycero-3-phospho-(1'-sn-glycerol) + hexadecanoyl-CoA = 1-acyl-2-hexadecanoyl-sn-glycero-3-phospho-(1'-sn-glycerol) + CoA. The protein operates within lipid metabolism; phospholipid metabolism. Not activated by inflammatory stimulation. Inhibited by Cu(2+), Fe(2+), Ca(2+) and Mg(2+). Activity is not affected by Co(2+) or Mn(2+). Exhibits both acyltransferase and acetyltransferase activities. Activity is calcium-independent. Catalyzes the conversion of lysophosphatidylcholine (1-acyl-sn-glycero-3-phosphocholine or LPC) into phosphatidylcholine (1,2-diacyl-sn-glycero-3-phosphocholine or PC). Catalyzes the conversion 1-acyl-sn-glycerol-3-phosphate (lysophosphatidic acid or LPA) into 1,2-diacyl-sn-glycerol-3-phosphate (phosphatidic acid or PA) by incorporating an acyl moiety at the sn-2 position of the glycerol backbone. Displays a clear preference for saturated fatty acyl-CoAs, and 1-myristoyl or 1-palmitoyl LPC as acyl donors and acceptors, respectively. Involved in platelet-activating factor (PAF) biosynthesis by catalyzing the conversion of the PAF precursor, 1-O-alkyl-sn-glycero-3-phosphocholine (lyso-PAF) into 1-O-alkyl-2-acetyl-sn-glycero-3-phosphocholine (PAF). May synthesize phosphatidylcholine in pulmonary surfactant, thereby playing a pivotal role in respiratory physiology. Involved in the regulation of lipid droplet number and size. This is Lysophosphatidylcholine acyltransferase 1 (Lpcat1) from Mus musculus (Mouse).